Reading from the N-terminus, the 511-residue chain is Phospho-2-dehydro-3-deoxyheptonate aldolase 1, chloroplastic (511 aa).

The transit peptide at 1-49 (MALSNTLSLSSSKSLVQSHLLHNPTPQPRFSLFPTTQHGRRHPISAVHA) directs the protein to the chloroplast.

This sequence belongs to the class-II DAHP synthase family. As to expression, higher levels seen in the cotyledons than in the leaves and flowers. Lower levels seen in the roots and stems.

It localises to the plastid. The protein localises to the chloroplast. It carries out the reaction D-erythrose 4-phosphate + phosphoenolpyruvate + H2O = 7-phospho-2-dehydro-3-deoxy-D-arabino-heptonate + phosphate. Its pathway is metabolic intermediate biosynthesis; chorismate biosynthesis; chorismate from D-erythrose 4-phosphate and phosphoenolpyruvate: step 1/7. In terms of biological role, may be involved in the synthesis of secondary metabolites derived from intermediates of the pre-chorismate pathway up to shikimate. The protein is Phospho-2-dehydro-3-deoxyheptonate aldolase 1, chloroplastic of Solanum lycopersicum (Tomato).